A 186-amino-acid polypeptide reads, in one-letter code: Ribosome-recycling factor (186 aa).

Positions 135 to 164 (DGMDDLKKAEKDGEIGQDESRAQSERVQKM) are disordered.

This sequence belongs to the RRF family.

It is found in the cytoplasm. Responsible for the release of ribosomes from messenger RNA at the termination of protein biosynthesis. May increase the efficiency of translation by recycling ribosomes from one round of translation to another. The sequence is that of Ribosome-recycling factor from Rhizobium meliloti (strain 1021) (Ensifer meliloti).